The following is a 292-amino-acid chain: Glutamate racemase (292 aa).

Substrate is bound by residues 28-29 and 60-61; these read DS and YG. Cys91 (proton donor/acceptor) is an active-site residue. Residue 92 to 93 participates in substrate binding; that stretch reads NT. The active-site Proton donor/acceptor is the Cys200. Residue 201-202 participates in substrate binding; that stretch reads TH.

This sequence belongs to the aspartate/glutamate racemases family.

It carries out the reaction L-glutamate = D-glutamate. It participates in cell wall biogenesis; peptidoglycan biosynthesis. Its function is as follows. Provides the (R)-glutamate required for cell wall biosynthesis. The sequence is that of Glutamate racemase from Nostoc sp. (strain PCC 7120 / SAG 25.82 / UTEX 2576).